The sequence spans 499 residues: Rhamnogalacturonan I rhamnosyltransferase 1 (499 aa).

The chain crosses the membrane as a helical; Signal-anchor for type II membrane protein span at residues 31–50 (WFVRVCSSILVWTCLVQLFA). N-linked (GlcNAc...) asparagine glycosylation is found at N88, N121, and N207. A substrate-binding site is contributed by 261-263 (HLR). N375, N435, and N496 each carry an N-linked (GlcNAc...) asparagine glycan.

It belongs to the glycosyltransferase GT106 family.

The protein resides in the golgi apparatus membrane. It catalyses the reaction alpha-D-galacturonosyl-[(1-&gt;2)-alpha-L-rhamnosyl-(1-&gt;4)-alpha-D-galacturonosyl](n) + UDP-beta-L-rhamnose = [(1-&gt;2)-alpha-L-rhamnosyl-(1-&gt;4)-alpha-D-galacturonosyl](n+1) + UDP + H(+). Its pathway is glycan metabolism; pectin biosynthesis. Glycosyltransferase involved in the formation of rhamnogalacturonan I (RG-I) oligosaccharides in the seed coat mucilage, which is a specialized cell wall with abundant RG-I. Transfers the rhamnose residue from UDP-beta-L-rhamnose to RG-I oligosaccharides. The polypeptide is Rhamnogalacturonan I rhamnosyltransferase 1 (Arabidopsis thaliana (Mouse-ear cress)).